The following is a 377-amino-acid chain: Lipoyl synthase, mitochondrial (377 aa).

[4Fe-4S] cluster contacts are provided by cysteine 103, cysteine 108, cysteine 114, cysteine 134, cysteine 138, cysteine 141, and serine 349. The Radical SAM core domain occupies 119-338; the sequence is EHGTQTATIM…EERGNELGFL (220 aa).

The protein belongs to the radical SAM superfamily. Lipoyl synthase family. [4Fe-4S] cluster serves as cofactor.

The protein resides in the mitochondrion. The catalysed reaction is [[Fe-S] cluster scaffold protein carrying a second [4Fe-4S](2+) cluster] + N(6)-octanoyl-L-lysyl-[protein] + 2 oxidized [2Fe-2S]-[ferredoxin] + 2 S-adenosyl-L-methionine + 4 H(+) = [[Fe-S] cluster scaffold protein] + N(6)-[(R)-dihydrolipoyl]-L-lysyl-[protein] + 4 Fe(3+) + 2 hydrogen sulfide + 2 5'-deoxyadenosine + 2 L-methionine + 2 reduced [2Fe-2S]-[ferredoxin]. Its pathway is protein modification; protein lipoylation via endogenous pathway; protein N(6)-(lipoyl)lysine from octanoyl-[acyl-carrier-protein]: step 2/2. Its function is as follows. Catalyzes the radical-mediated insertion of two sulfur atoms into the C-6 and C-8 positions of the octanoyl moiety bound to the lipoyl domains of lipoate-dependent enzymes, thereby converting the octanoylated domains into lipoylated derivatives. The sequence is that of Lipoyl synthase, mitochondrial from Drosophila sechellia (Fruit fly).